Reading from the N-terminus, the 320-residue chain is Apolipoprotein E (320 aa).

Positions 1–18 (MKVLWAALLVAFLAGCQG) are cleaved as a signal peptide. 8 tandem repeats follow at residues 82–103 (ALMDETMKELKAYKSELEEQLS), 104–125 (PVAEETRARLSKELQAAQARLG), 126–147 (ADMEDVRSRLAQYRSEVQAMLG), 148–169 (QSTEELRARLASHLRKLRKRLL), 170–191 (RDVDDLQKRLAVYQAGAREGAE), 192–213 (RGVSAIRERLGPLVEQGRARAA), 214–236 (TVGSSLAGQPLQERAQAWGERLR), and 237–258 (ARMEEVGSRTRDRLDEVKEQVE). Positions 82 to 258 (ALMDETMKEL…RLDEVKEQVE (177 aa)) are 8 X 22 AA approximate tandem repeats. Residue Met145 is modified to Methionine sulfoxide. Phosphoserine is present on Ser149. Positions 160 to 170 (HLRKLRKRLLR) are LDL and other lipoprotein receptors binding. 164–167 (LRKR) lines the heparin pocket. The lipid-binding and lipoprotein association stretch occupies residues 212 to 293 (AATVGSSLAG…SWFEPLVEDM (82 aa)). Residue 232–239 (GERLRARM) coordinates heparin. A homooligomerization region spans residues 269-320 (QQMRLQAEAFQARLKSWFEPLVEDMQRQWAGLVEKVQAAVGASAAPVPSDNH). The interval 281–293 (RLKSWFEPLVEDM) is specificity for association with VLDL.

It belongs to the apolipoprotein A1/A4/E family. In terms of assembly, homotetramer. May interact with ABCA1; functionally associated with ABCA1 in the biogenesis of HDLs. May interact with APP/A4 amyloid-beta peptide; the interaction is extremely stable in vitro but its physiological significance is unclear. May interact with MAPT. May interact with MAP2. In the cerebrospinal fluid, interacts with secreted SORL1. Interacts with PMEL; this allows the loading of PMEL luminal fragment on ILVs to induce fibril nucleation. Post-translationally, APOE exists as multiple glycosylated and sialylated glycoforms within cells and in plasma. The extent of glycosylation and sialylation are tissue and context specific. In terms of processing, glycated in plasma VLDL. Phosphorylated by FAM20C in the extracellular medium.

The protein localises to the secreted. Its subcellular location is the extracellular space. The protein resides in the extracellular matrix. It is found in the extracellular vesicle. It localises to the endosome. The protein localises to the multivesicular body. Its function is as follows. APOE is an apolipoprotein, a protein associating with lipid particles, that mainly functions in lipoprotein-mediated lipid transport between organs via the plasma and interstitial fluids. APOE is a core component of plasma lipoproteins and is involved in their production, conversion and clearance. Apolipoproteins are amphipathic molecules that interact both with lipids of the lipoprotein particle core and the aqueous environment of the plasma. As such, APOE associates with chylomicrons, chylomicron remnants, very low density lipoproteins (VLDL) and intermediate density lipoproteins (IDL) but shows a preferential binding to high-density lipoproteins (HDL). It also binds a wide range of cellular receptors including the LDL receptor/LDLR, the LDL receptor-related proteins LRP1, LRP2 and LRP8 and the very low-density lipoprotein receptor/VLDLR that mediate the cellular uptake of the APOE-containing lipoprotein particles. Finally, APOE also has a heparin-binding activity and binds heparan-sulfate proteoglycans on the surface of cells, a property that supports the capture and the receptor-mediated uptake of APOE-containing lipoproteins by cells. A main function of APOE is to mediate lipoprotein clearance through the uptake of chylomicrons, VLDLs, and HDLs by hepatocytes. APOE is also involved in the biosynthesis by the liver of VLDLs as well as their uptake by peripheral tissues ensuring the delivery of triglycerides and energy storage in muscle, heart and adipose tissues. By participating in the lipoprotein-mediated distribution of lipids among tissues, APOE plays a critical role in plasma and tissues lipid homeostasis. APOE is also involved in two steps of reverse cholesterol transport, the HDLs-mediated transport of cholesterol from peripheral tissues to the liver, and thereby plays an important role in cholesterol homeostasis. First, it is functionally associated with ABCA1 in the biogenesis of HDLs in tissues. Second, it is enriched in circulating HDLs and mediates their uptake by hepatocytes. APOE also plays an important role in lipid transport in the central nervous system, regulating neuron survival and sprouting. This Plecturocebus moloch (Dusky titi monkey) protein is Apolipoprotein E (APOE).